A 226-amino-acid polypeptide reads, in one-letter code: Holliday junction branch migration complex subunit RuvA (226 aa).

Residues 1-67 (MITSVYAKIE…AINKELYAFK (67 aa)) are domain I. The segment at 68 to 145 (SLKEKEWFKA…YLKNQIVVSD (78 aa)) is domain II. The tract at residues 146 to 167 (KVEPQIDDDEKIDDSKDLNDDE) is flexible linker. The tract at residues 168–226 (LLSEIVIEAIDCLISLGYKQEQIKTALAEIDLKNESINDSADLVAVIIKQIGLRTSEVS) is domain III.

The protein belongs to the RuvA family. Homotetramer. Forms an RuvA(8)-RuvB(12)-Holliday junction (HJ) complex. HJ DNA is sandwiched between 2 RuvA tetramers; dsDNA enters through RuvA and exits via RuvB. An RuvB hexamer assembles on each DNA strand where it exits the tetramer. Each RuvB hexamer is contacted by two RuvA subunits (via domain III) on 2 adjacent RuvB subunits; this complex drives branch migration. In the full resolvosome a probable DNA-RuvA(4)-RuvB(12)-RuvC(2) complex forms which resolves the HJ.

Its subcellular location is the cytoplasm. Functionally, the RuvA-RuvB-RuvC complex processes Holliday junction (HJ) DNA during genetic recombination and DNA repair, while the RuvA-RuvB complex plays an important role in the rescue of blocked DNA replication forks via replication fork reversal (RFR). RuvA specifically binds to HJ cruciform DNA, conferring on it an open structure. The RuvB hexamer acts as an ATP-dependent pump, pulling dsDNA into and through the RuvAB complex. HJ branch migration allows RuvC to scan DNA until it finds its consensus sequence, where it cleaves and resolves the cruciform DNA. The chain is Holliday junction branch migration complex subunit RuvA from Mycoplasmoides gallisepticum (strain R(low / passage 15 / clone 2)) (Mycoplasma gallisepticum).